The chain runs to 235 residues: Ubiquitin-like-conjugating enzyme ATG10 (235 aa).

Residue Cys-196 is the Glycyl thioester intermediate of the active site.

It belongs to the ATG10 family. In terms of assembly, forms homooligomers. Interacts with ATG7 and ATG12.

It localises to the preautophagosomal structure membrane. In terms of biological role, E2-like enzyme required for the cytoplasm to vacuole transport (Cvt), autophagy and nucleophagy. Acts as an E2-like enzyme that catalyzes the conjugation of ATG12 to ATG5. ATG12 conjugation to ATG5 is required for proper localization of ATG8 to the preautophagosomal structure (PAS). Likely serves as an ATG5-recognition molecule. Autophagy is required for proper vegetative growth, asexual/sexual reproduction, and full virulence. Autophagy is particularly involved in the biosynthesis of deoxynivalenol (DON), an important virulence determinant. This Gibberella zeae (strain ATCC MYA-4620 / CBS 123657 / FGSC 9075 / NRRL 31084 / PH-1) (Wheat head blight fungus) protein is Ubiquitin-like-conjugating enzyme ATG10.